Reading from the N-terminus, the 177-residue chain is Large ribosomal subunit protein uL10 (177 aa).

This sequence belongs to the universal ribosomal protein uL10 family. In terms of assembly, part of the ribosomal stalk of the 50S ribosomal subunit. The N-terminus interacts with L11 and the large rRNA to form the base of the stalk. The C-terminus forms an elongated spine to which L12 dimers bind in a sequential fashion forming a multimeric L10(L12)X complex.

Forms part of the ribosomal stalk, playing a central role in the interaction of the ribosome with GTP-bound translation factors. The sequence is that of Large ribosomal subunit protein uL10 from Xanthomonas campestris pv. campestris (strain 8004).